We begin with the raw amino-acid sequence, 681 residues long: MASKYERILSDCRSKNVLWEDPDFPAVQSSVFYYQTPPFTFQWKRIMDLADSGSGAVAANSSAAPVFLNESAEFDVVPGKMGDRWLVSCLGLLSSLRNLFYRVVPADQTLASAHGVFRFRLWWCGEWVEVLVDDRLPTINGRLAFMQPQASNCFWAALLEKAIAKLHGSYEALKYGTRSDGLTDLLGGVVRQMPILSDNIRPQTLKELLTTTCIVTCLADKSATVAKKNLAERMPNGILVNVNYRLSSLDKVKTLMGDSVQLVCLKDTFSSKPFGEKTHFLGDWSPMSKTWERVSQVERARLIRQLGPGEFWLSFCDFVEIFSTMEVVYLDTETSNDEEMLKSRPLHWKMKMHQGQWKRGVTAGGCRNHESFHINPQLLISVQDEQDLVIALNQHTAVEPKVIGFTMYTWDGEYMLSECLQKDFFKNHVSYLNSDYGNTRHVSYHTHLEAGHYVLIPTTYEPAEEAHFTVRILGTGSFRLSCLETQTMILLDPFPALKSTDAERCGGPKVKSVCQYEPVYMQLADENKTINCFELHELLEACLPNDYIKGCANIDICRQVIALQDRSGSGRITFQQFKTFMVNLKSWQGVFKMYTKEKAGILRAERLRDALCDIGFQLSTDIMNCLIQRYIRKDGTLRLSDFVSAVIHLTTAFNQFHLKNYGQVNVIEVHLHDWIKSILSC.

In terms of domain architecture, Calpain catalytic spans 18 to 331 (LWEDPDFPAV…FSTMEVVYLD (314 aa)). The interval 332-481 (TETSNDEEML…ILGTGSFRLS (150 aa)) is domain III. Positions 482–514 (CLETQTMILLDPFPALKSTDAERCGGPKVKSVC) are linker. The interval 515 to 681 (QYEPVYMQLA…HDWIKSILSC (167 aa)) is domain IV. One can recognise an EF-hand domain in the interval 552–587 (ANIDICRQVIALQDRSGSGRITFQQFKTFMVNLKSW). 4 residues coordinate Ca(2+): aspartate 565, serine 567, serine 569, and arginine 571.

It belongs to the peptidase C2 family. As to expression, localized to the salivary glands in the larva.

The protein localises to the cytoplasm. Functionally, not known; does not seem to have protease activity. The chain is Calpain-C from Drosophila melanogaster (Fruit fly).